Here is a 391-residue protein sequence, read N- to C-terminus: 3-ketoacyl-CoA thiolase (391 aa).

Cys-95 acts as the Acyl-thioester intermediate in catalysis. Residues His-347 and Cys-377 each act as proton acceptor in the active site.

Belongs to the thiolase-like superfamily. Thiolase family. In terms of assembly, heterotetramer of two alpha chains (FadB) and two beta chains (FadA).

It localises to the cytoplasm. The catalysed reaction is an acyl-CoA + acetyl-CoA = a 3-oxoacyl-CoA + CoA. The protein operates within lipid metabolism; fatty acid beta-oxidation. Catalyzes the final step of fatty acid oxidation in which acetyl-CoA is released and the CoA ester of a fatty acid two carbons shorter is formed. The chain is 3-ketoacyl-CoA thiolase from Pseudomonas fluorescens (strain ATCC BAA-477 / NRRL B-23932 / Pf-5).